Here is a 517-residue protein sequence, read N- to C-terminus: Putative succinate-semialdehyde dehydrogenase [NADP(+)] (517 aa).

NADP(+) is bound by residues 157-158 (WN), 181-184 (KPDS), and 232-233 (GS). Catalysis depends on E254, which acts as the Proton acceptor. Residue L255 coordinates NADP(+). C288 functions as the Nucleophile in the catalytic mechanism. E386 lines the NADP(+) pocket.

The protein belongs to the aldehyde dehydrogenase family.

The catalysed reaction is succinate semialdehyde + NADP(+) + H2O = succinate + NADPH + 2 H(+). Its function is as follows. Catalyzes the NADP(+)-dependent oxidation of succinate semialdehyde to succinate. Although it has succinate semialdehyde dehydrogenase activity, is likely to act physiologically on a different aldehyde(s). The polypeptide is Putative succinate-semialdehyde dehydrogenase [NADP(+)] (gabD2) (Mycolicibacterium smegmatis (strain ATCC 700084 / mc(2)155) (Mycobacterium smegmatis)).